The following is a 131-amino-acid chain: Small ribosomal subunit protein uS8 (131 aa).

The protein belongs to the universal ribosomal protein uS8 family. As to quaternary structure, part of the 30S ribosomal subunit. Contacts proteins S5 and S12.

In terms of biological role, one of the primary rRNA binding proteins, it binds directly to 16S rRNA central domain where it helps coordinate assembly of the platform of the 30S subunit. The chain is Small ribosomal subunit protein uS8 from Blochmanniella pennsylvanica (strain BPEN).